A 142-amino-acid chain; its full sequence is MAKKVQAYVKLQVAAGMANPSPPVGPALGQQGVNIMEFCKAFNARTESIEKGLPIPVVITVYADRSFTFVTKTPPAAVLLKKAAGIKSGSGKPNKDKVGKVTQDQIRQIAETKAADMTGATIETKMKSIAGTARSMGLVVEE.

It belongs to the universal ribosomal protein uL11 family. Part of the ribosomal stalk of the 50S ribosomal subunit. Interacts with L10 and the large rRNA to form the base of the stalk. L10 forms an elongated spine to which L12 dimers bind in a sequential fashion forming a multimeric L10(L12)X complex. Post-translationally, one or more lysine residues are methylated.

Its function is as follows. Forms part of the ribosomal stalk which helps the ribosome interact with GTP-bound translation factors. The protein is Large ribosomal subunit protein uL11 of Actinobacillus succinogenes (strain ATCC 55618 / DSM 22257 / CCUG 43843 / 130Z).